The chain runs to 181 residues: Aminoglycoside 2'-N-acetyltransferase (181 aa).

Positions 11-162 (VHTADLDSET…DGTVFVLPID (152 aa)) constitute an N-acetyltransferase domain. Substrate-binding positions include Asp35 and 82–83 (EG). Residues 84 to 86 (VAV) and 91 to 96 (RGQRLV) each bind CoA. Residues Ser117 and 151–152 (DD) each bind substrate.

Belongs to the AAC(2')-I acetyltransferase family. As to quaternary structure, homodimer.

In terms of biological role, catalyzes the coenzyme A-dependent acetylation of the 2' hydroxyl or amino group of a broad spectrum of aminoglycosides. It confers resistance to aminoglycosides. The polypeptide is Aminoglycoside 2'-N-acetyltransferase (aac) (Mycobacterium bovis (strain ATCC BAA-935 / AF2122/97)).